A 537-amino-acid polypeptide reads, in one-letter code: Proline--tRNA ligase (537 aa).

It belongs to the class-II aminoacyl-tRNA synthetase family. ProS type 3 subfamily. Homodimer.

The protein resides in the cytoplasm. The catalysed reaction is tRNA(Pro) + L-proline + ATP = L-prolyl-tRNA(Pro) + AMP + diphosphate. Catalyzes the attachment of proline to tRNA(Pro) in a two-step reaction: proline is first activated by ATP to form Pro-AMP and then transferred to the acceptor end of tRNA(Pro). The sequence is that of Proline--tRNA ligase from Nanoarchaeum equitans (strain Kin4-M).